The primary structure comprises 457 residues: RuvB-like helicase 1 (457 aa).

An ATP-binding site is contributed by 73–80 (GGPSTGKT).

This sequence belongs to the RuvB family. As to quaternary structure, may form heterododecamers with RVB2. Component of the SWR1 chromatin remodeling complex, the INO80 chromatin remodeling complex, and of the R2TP complex.

It localises to the nucleus. The enzyme catalyses ATP + H2O = ADP + phosphate + H(+). Functionally, DNA helicase which participates in several chromatin remodeling complexes, including the SWR1 and the INO80 complexes. The SWR1 complex mediates the ATP-dependent exchange of histone H2A for the H2A variant HZT1 leading to transcriptional regulation of selected genes by chromatin remodeling. The INO80 complex remodels chromatin by shifting nucleosomes and is involved in DNA repair. Also involved in pre-rRNA processing. This chain is RuvB-like helicase 1 (RVB1), found in Candida glabrata (strain ATCC 2001 / BCRC 20586 / JCM 3761 / NBRC 0622 / NRRL Y-65 / CBS 138) (Yeast).